We begin with the raw amino-acid sequence, 391 residues long: Transposase for insertion sequence element IS905 (391 aa).

The protein belongs to the transposase mutator family.

In terms of biological role, required for the transposition of the insertion element. The protein is Transposase for insertion sequence element IS905 (tra905) of Lactococcus lactis subsp. lactis (strain IL1403) (Streptococcus lactis).